The primary structure comprises 464 residues: UPF0210 protein MA_1691 (464 aa).

Belongs to the UPF0210 family.

The protein is UPF0210 protein MA_1691 of Methanosarcina acetivorans (strain ATCC 35395 / DSM 2834 / JCM 12185 / C2A).